The following is a 490-amino-acid chain: Glutamate--tRNA ligase (490 aa).

The short motif at P10 to G20 is the 'HIGH' region element. Positions K251–R255 match the 'KMSKS' region motif. K254 contributes to the ATP binding site.

It belongs to the class-I aminoacyl-tRNA synthetase family. Glutamate--tRNA ligase type 1 subfamily. As to quaternary structure, monomer.

The protein localises to the cytoplasm. The catalysed reaction is tRNA(Glu) + L-glutamate + ATP = L-glutamyl-tRNA(Glu) + AMP + diphosphate. In terms of biological role, catalyzes the attachment of glutamate to tRNA(Glu) in a two-step reaction: glutamate is first activated by ATP to form Glu-AMP and then transferred to the acceptor end of tRNA(Glu). In Moorella thermoacetica (strain ATCC 39073 / JCM 9320), this protein is Glutamate--tRNA ligase.